Here is a 382-residue protein sequence, read N- to C-terminus: Apolipoprotein A-IV (382 aa).

Positions 1–20 (MFLKAVVLTLSLVAVTGAQA) are cleaved as a signal peptide. A run of 13 repeats spans residues 33-54 (DYFS…KSEL), 60-81 (ALFQ…KKLV), 82-103 (SFAM…EEIR), 115-136 (PHAD…QRLG), 137-158 (PYAE…NQLT), 159-180 (AHAQ…ASLT), 181-202 (PYAD…GHLT), 203-224 (PYAD…RSLA), 225-246 (PYAQ…FQMK), 247-268 (KNAE…QKLV), 269-286 (PVAE…EELQ), 287-308 (KSLA…RNMG), and 309-330 (PYGE…QKLG). Residues 33-330 (DYFSQLSNNA…QVEELRQKLG (298 aa)) form a 13 X 22 AA approximate tandem repeats region.

It belongs to the apolipoprotein A1/A4/E family. Homodimer. In terms of processing, phosphorylation sites are present in the extracellular medium.

It localises to the secreted. In terms of biological role, may have a role in chylomicrons and VLDL secretion and catabolism. Required for efficient activation of lipoprotein lipase by ApoC-II; potent activator of LCAT. Apoa-IV is a major component of HDL and chylomicrons. This Mirounga angustirostris (Northern elephant seal) protein is Apolipoprotein A-IV (APOA4).